A 255-amino-acid polypeptide reads, in one-letter code: Imidazole glycerol phosphate synthase subunit HisF (255 aa).

Active-site residues include D12 and D131.

Belongs to the HisA/HisF family. In terms of assembly, heterodimer of HisH and HisF.

The protein localises to the cytoplasm. It catalyses the reaction 5-[(5-phospho-1-deoxy-D-ribulos-1-ylimino)methylamino]-1-(5-phospho-beta-D-ribosyl)imidazole-4-carboxamide + L-glutamine = D-erythro-1-(imidazol-4-yl)glycerol 3-phosphate + 5-amino-1-(5-phospho-beta-D-ribosyl)imidazole-4-carboxamide + L-glutamate + H(+). Its pathway is amino-acid biosynthesis; L-histidine biosynthesis; L-histidine from 5-phospho-alpha-D-ribose 1-diphosphate: step 5/9. In terms of biological role, IGPS catalyzes the conversion of PRFAR and glutamine to IGP, AICAR and glutamate. The HisF subunit catalyzes the cyclization activity that produces IGP and AICAR from PRFAR using the ammonia provided by the HisH subunit. The chain is Imidazole glycerol phosphate synthase subunit HisF from Ignicoccus hospitalis (strain KIN4/I / DSM 18386 / JCM 14125).